The sequence spans 350 residues: Phosphoribosylformylglycinamidine cyclo-ligase (350 aa).

The protein belongs to the AIR synthase family.

Its subcellular location is the cytoplasm. It carries out the reaction 2-formamido-N(1)-(5-O-phospho-beta-D-ribosyl)acetamidine + ATP = 5-amino-1-(5-phospho-beta-D-ribosyl)imidazole + ADP + phosphate + H(+). The protein operates within purine metabolism; IMP biosynthesis via de novo pathway; 5-amino-1-(5-phospho-D-ribosyl)imidazole from N(2)-formyl-N(1)-(5-phospho-D-ribosyl)glycinamide: step 2/2. In Syntrophotalea carbinolica (strain DSM 2380 / NBRC 103641 / GraBd1) (Pelobacter carbinolicus), this protein is Phosphoribosylformylglycinamidine cyclo-ligase.